Here is a 517-residue protein sequence, read N- to C-terminus: 2-isopropylmalate synthase (517 aa).

Positions 6–267 (IIVFDTTLRD…YTTINTPEIY (262 aa)) constitute a Pyruvate carboxyltransferase domain. Residues Asp15, His201, His203, and Asn237 each contribute to the Mn(2+) site. Positions 393-517 (DLIGLQISDC…RLSKSSEHQV (125 aa)) are regulatory domain.

It belongs to the alpha-IPM synthase/homocitrate synthase family. LeuA type 1 subfamily. As to quaternary structure, homodimer. Mn(2+) is required as a cofactor.

The protein localises to the cytoplasm. The catalysed reaction is 3-methyl-2-oxobutanoate + acetyl-CoA + H2O = (2S)-2-isopropylmalate + CoA + H(+). It participates in amino-acid biosynthesis; L-leucine biosynthesis; L-leucine from 3-methyl-2-oxobutanoate: step 1/4. Its function is as follows. Catalyzes the condensation of the acetyl group of acetyl-CoA with 3-methyl-2-oxobutanoate (2-ketoisovalerate) to form 3-carboxy-3-hydroxy-4-methylpentanoate (2-isopropylmalate). The sequence is that of 2-isopropylmalate synthase from Aliarcobacter butzleri (strain RM4018) (Arcobacter butzleri).